The following is a 72-amino-acid chain: Translation initiation factor IF-1 (72 aa).

The region spanning 1 to 72 is the S1-like domain; it reads MAKEDNIEMQ…SKGRIVFRSR (72 aa).

Belongs to the IF-1 family. In terms of assembly, component of the 30S ribosomal translation pre-initiation complex which assembles on the 30S ribosome in the order IF-2 and IF-3, IF-1 and N-formylmethionyl-tRNA(fMet); mRNA recruitment can occur at any time during PIC assembly.

Its subcellular location is the cytoplasm. In terms of biological role, one of the essential components for the initiation of protein synthesis. Stabilizes the binding of IF-2 and IF-3 on the 30S subunit to which N-formylmethionyl-tRNA(fMet) subsequently binds. Helps modulate mRNA selection, yielding the 30S pre-initiation complex (PIC). Upon addition of the 50S ribosomal subunit IF-1, IF-2 and IF-3 are released leaving the mature 70S translation initiation complex. The sequence is that of Translation initiation factor IF-1 from Shewanella pealeana (strain ATCC 700345 / ANG-SQ1).